The following is a 283-amino-acid chain: Elongation factor Ts (283 aa).

Positions 80–83 (TDFV) are involved in Mg(2+) ion dislocation from EF-Tu.

The protein belongs to the EF-Ts family.

Its subcellular location is the cytoplasm. Functionally, associates with the EF-Tu.GDP complex and induces the exchange of GDP to GTP. It remains bound to the aminoacyl-tRNA.EF-Tu.GTP complex up to the GTP hydrolysis stage on the ribosome. The polypeptide is Elongation factor Ts (Citrobacter koseri (strain ATCC BAA-895 / CDC 4225-83 / SGSC4696)).